Consider the following 255-residue polypeptide: F-box/SPRY domain-containing protein 1 (255 aa).

Positions Asp3–His51 constitute an F-box domain. Positions Thr61–Leu253 constitute a B30.2/SPRY domain.

This sequence belongs to the FBXO45/Fsn family. Component of an E3 ubiquitin ligase complex composed of hiw and Fsn.

It localises to the synapse. It functions in the pathway protein modification; protein ubiquitination. Required in the presynaptic motoneuron to down-regulate the levels of wnd and restrain synaptic terminal growth at the neuromuscular junction (NMJ). The protein is F-box/SPRY domain-containing protein 1 of Drosophila persimilis (Fruit fly).